The chain runs to 321 residues: MISRHLQNNLMSVDPASSQAMELSDVTLIEGVGNEVMVVAGVVVLILALVLAWLSTYVADSGSNQLLGAIVSAGDTSVLHLGHVDHLVAGQGNPEPTELPHPSEGNDEKAEEAGEGRGDSTGEAGAGGGVEPSLEHLLDIQGLPKRQAGAGSSSPEAPLRSEDSTCLPPSPGLITVRLKFLNDTEELAVARPEDTVGALKSKYFPGQESQMKLIYQGRLLQDPARTLRSLNITDNCVIHCHRSPPGSAVPGPSASLAPSATEPPSLGVNVGSLMVPVFVVLLGVVWYFRINYRQFFTAPATVSLVGVTVFFSFLVFGMYGR.

The helical transmembrane segment at 36 to 56 (VMVVAGVVVLILALVLAWLST) threads the bilayer. 2 disordered regions span residues 87–131 (LVAG…GGVE) and 145–170 (KRQAGAGSSSPEAPLRSEDSTCLPPS). Over residues 104-120 (EGNDEKAEEAGEGRGDS) the composition is skewed to basic and acidic residues. One can recognise a Ubiquitin-like domain in the interval 174 to 247 (ITVRLKFLND…IHCHRSPPGS (74 aa)). 2 consecutive transmembrane segments (helical) span residues 266–286 (LGVNVGSLMVPVFVVLLGVVW) and 295–315 (FFTAPATVSLVGVTVFFSFLV).

Its subcellular location is the membrane. The chain is Transmembrane and ubiquitin-like domain-containing protein 2 (TMUB2) from Homo sapiens (Human).